The primary structure comprises 433 residues: tRNA-2-methylthio-N(6)-dimethylallyladenosine synthase (433 aa).

Residues K4 to F119 enclose the MTTase N-terminal domain. The [4Fe-4S] cluster site is built by C13, C50, C82, C151, C155, and C158. The Radical SAM core domain occupies R137–K370. Residues K373–V433 enclose the TRAM domain.

Belongs to the methylthiotransferase family. MiaB subfamily. As to quaternary structure, monomer. [4Fe-4S] cluster is required as a cofactor.

The protein localises to the cytoplasm. The catalysed reaction is N(6)-dimethylallyladenosine(37) in tRNA + (sulfur carrier)-SH + AH2 + 2 S-adenosyl-L-methionine = 2-methylsulfanyl-N(6)-dimethylallyladenosine(37) in tRNA + (sulfur carrier)-H + 5'-deoxyadenosine + L-methionine + A + S-adenosyl-L-homocysteine + 2 H(+). Catalyzes the methylthiolation of N6-(dimethylallyl)adenosine (i(6)A), leading to the formation of 2-methylthio-N6-(dimethylallyl)adenosine (ms(2)i(6)A) at position 37 in tRNAs that read codons beginning with uridine. The protein is tRNA-2-methylthio-N(6)-dimethylallyladenosine synthase of Campylobacter jejuni subsp. jejuni serotype O:2 (strain ATCC 700819 / NCTC 11168).